A 192-amino-acid polypeptide reads, in one-letter code: dCTP deaminase, dUMP-forming (192 aa).

Residues 101-106, aspartate 119, 127-129, glutamine 148, tyrosine 162, and glutamine 174 each bind dCTP; these read KSSLGR and TLE. The active-site Proton donor/acceptor is glutamate 129. A disordered region spans residues 169–192; it reads SRYQGQRGPTPSRSWQSWRTWPTR. Polar residues predominate over residues 171-192; it reads YQGQRGPTPSRSWQSWRTWPTR.

The protein belongs to the dCTP deaminase family. In terms of assembly, homotrimer.

It catalyses the reaction dCTP + 2 H2O = dUMP + NH4(+) + diphosphate. Its pathway is pyrimidine metabolism; dUMP biosynthesis; dUMP from dCTP: step 1/1. In terms of biological role, bifunctional enzyme that catalyzes both the deamination of dCTP to dUTP and the hydrolysis of dUTP to dUMP without releasing the toxic dUTP intermediate. The polypeptide is dCTP deaminase, dUMP-forming (Salinispora tropica (strain ATCC BAA-916 / DSM 44818 / JCM 13857 / NBRC 105044 / CNB-440)).